The sequence spans 222 residues: Deoxyribose-phosphate aldolase (222 aa).

Asp90 acts as the Proton donor/acceptor in catalysis. Lys152 functions as the Schiff-base intermediate with acetaldehyde in the catalytic mechanism. The active-site Proton donor/acceptor is the Lys181.

Belongs to the DeoC/FbaB aldolase family. DeoC type 1 subfamily.

Its subcellular location is the cytoplasm. It carries out the reaction 2-deoxy-D-ribose 5-phosphate = D-glyceraldehyde 3-phosphate + acetaldehyde. It functions in the pathway carbohydrate degradation; 2-deoxy-D-ribose 1-phosphate degradation; D-glyceraldehyde 3-phosphate and acetaldehyde from 2-deoxy-alpha-D-ribose 1-phosphate: step 2/2. In terms of biological role, catalyzes a reversible aldol reaction between acetaldehyde and D-glyceraldehyde 3-phosphate to generate 2-deoxy-D-ribose 5-phosphate. The polypeptide is Deoxyribose-phosphate aldolase (Pectobacterium carotovorum subsp. carotovorum (strain PC1)).